Reading from the N-terminus, the 449-residue chain is Adenosylhomocysteinase (449 aa).

Residue S2 is modified to N-acetylserine. A Glycyl lysine isopeptide (Lys-Gly) (interchain with G-Cter in ubiquitin) cross-link involves residue K21. Substrate contacts are provided by T58, D134, and E159. 160–162 (TTT) is an NAD(+) binding site. Substrate contacts are provided by K189 and D193. NAD(+) is bound by residues N194, 223–228 (GYGDVG), E246, 302–304 (IGH), and N349. T393 is modified (phosphothreonine). K413 participates in a covalent cross-link: Glycyl lysine isopeptide (Lys-Gly) (interchain with G-Cter in ubiquitin).

It belongs to the adenosylhomocysteinase family. Requires NAD(+) as cofactor.

It carries out the reaction S-adenosyl-L-homocysteine + H2O = L-homocysteine + adenosine. The protein operates within amino-acid biosynthesis; L-homocysteine biosynthesis; L-homocysteine from S-adenosyl-L-homocysteine: step 1/1. Its function is as follows. Adenosylhomocysteine is a competitive inhibitor of S-adenosyl-L-methionine-dependent methyl transferase reactions; therefore adenosylhomocysteinase may play a key role in the control of methylations via regulation of the intracellular concentration of adenosylhomocysteine. The polypeptide is Adenosylhomocysteinase (SAH1) (Saccharomyces cerevisiae (strain ATCC 204508 / S288c) (Baker's yeast)).